The following is a 457-amino-acid chain: Argininosuccinate lyase (457 aa).

The protein belongs to the lyase 1 family. Argininosuccinate lyase subfamily.

It localises to the cytoplasm. It carries out the reaction 2-(N(omega)-L-arginino)succinate = fumarate + L-arginine. It functions in the pathway amino-acid biosynthesis; L-arginine biosynthesis; L-arginine from L-ornithine and carbamoyl phosphate: step 3/3. The sequence is that of Argininosuccinate lyase from Klebsiella pneumoniae subsp. pneumoniae (strain ATCC 700721 / MGH 78578).